Here is a 352-residue protein sequence, read N- to C-terminus: MQEEKSKEDHSRLINVTAKDLTVRNRRLVEVPYTATLSHAMNTLVANSISALPVAAPPGHWIGAGGSMIMESDKQTGVVRKHYIGILTMLDILAHIAGEDSNLSDLDRKMSSQVSSIIGHCLEGLSLWTLNPNTSVLECMEVFSKGIHRALVPVESSIESNNTIAGVELIESASAYKMLTQMDLLRFLKDHHFDDLKTVLSRSISDLGAVNDSVYAITERTTVSNAINVMKGALLNAVPIVHAPDIAQEDHLQLVNGRHRKVIGTFSATDLKGCRLPELQTWLPLTALEFTEKTSGKEREVVSCGVESTMEEAIEKVVTRGVHRVWVMDQQGLLQGVVSLTDIIRSLRSTLS.

4 CBS domains span residues 24-106 (RNRR…LSDL), 122-196 (LEGL…FDDL), 210-281 (VNDS…ELQT), and 297-352 (KERE…STLS).

Belongs to the 5'-AMP-activated protein kinase gamma subunit family. Expressed highly in rosette leaves, cauline leaves, open flowers, developing siliques and dry seeds, but at a low level in stems and floral buds.

Functionally, plays redundant role with PV42b in regulating male gametogenesis and pollen tube guidance. The polypeptide is SNF1-related protein kinase regulatory subunit gamma-like PV42a (PV42A) (Arabidopsis thaliana (Mouse-ear cress)).